A 377-amino-acid polypeptide reads, in one-letter code: Succinyl-diaminopimelate desuccinylase (377 aa).

His68 contributes to the Zn(2+) binding site. Asp70 is a catalytic residue. Asp101 is a Zn(2+) binding site. Residue Glu135 is the Proton acceptor of the active site. Positions 136, 164, and 350 each coordinate Zn(2+).

Belongs to the peptidase M20A family. DapE subfamily. As to quaternary structure, homodimer. It depends on Zn(2+) as a cofactor. Co(2+) serves as cofactor.

The enzyme catalyses N-succinyl-(2S,6S)-2,6-diaminopimelate + H2O = (2S,6S)-2,6-diaminopimelate + succinate. Its pathway is amino-acid biosynthesis; L-lysine biosynthesis via DAP pathway; LL-2,6-diaminopimelate from (S)-tetrahydrodipicolinate (succinylase route): step 3/3. Its function is as follows. Catalyzes the hydrolysis of N-succinyl-L,L-diaminopimelic acid (SDAP), forming succinate and LL-2,6-diaminopimelate (DAP), an intermediate involved in the bacterial biosynthesis of lysine and meso-diaminopimelic acid, an essential component of bacterial cell walls. This chain is Succinyl-diaminopimelate desuccinylase, found in Aliivibrio fischeri (strain ATCC 700601 / ES114) (Vibrio fischeri).